The sequence spans 191 residues: Penicillin-binding protein activator LpoB (191 aa).

The N-terminal stretch at 1 to 16 is a signal peptide; that stretch reads MKRILFVILSTMLLAS. Residue cysteine 17 is the site of N-palmitoyl cysteine attachment. Cysteine 17 is lipidated: S-diacylglycerol cysteine. The segment at 25 to 48 is disordered; that stretch reads QPAPVTPVEPKEKQETTPIEPSEK.

This sequence belongs to the LpoB family. Interacts with PBP1b.

It localises to the cell outer membrane. Regulator of peptidoglycan synthesis that is essential for the function of penicillin-binding protein 1B (PBP1b). The polypeptide is Penicillin-binding protein activator LpoB (Xenorhabdus nematophila (strain ATCC 19061 / DSM 3370 / CCUG 14189 / LMG 1036 / NCIMB 9965 / AN6)).